The following is a 94-amino-acid chain: Small ribosomal subunit protein bS20c (94 aa).

It belongs to the bacterial ribosomal protein bS20 family.

It is found in the plastid. The protein resides in the chloroplast. In terms of biological role, binds directly to 16S ribosomal RNA. This chain is Small ribosomal subunit protein bS20c, found in Porphyra purpurea (Red seaweed).